The primary structure comprises 465 residues: ATP synthase subunit beta (465 aa).

ATP is bound at residue 155 to 162; sequence GGAGVGKT.

The protein belongs to the ATPase alpha/beta chains family. F-type ATPases have 2 components, CF(1) - the catalytic core - and CF(0) - the membrane proton channel. CF(1) has five subunits: alpha(3), beta(3), gamma(1), delta(1), epsilon(1). CF(0) has three main subunits: a(1), b(2) and c(9-12). The alpha and beta chains form an alternating ring which encloses part of the gamma chain. CF(1) is attached to CF(0) by a central stalk formed by the gamma and epsilon chains, while a peripheral stalk is formed by the delta and b chains.

The protein localises to the cell membrane. It catalyses the reaction ATP + H2O + 4 H(+)(in) = ADP + phosphate + 5 H(+)(out). Functionally, produces ATP from ADP in the presence of a proton gradient across the membrane. The catalytic sites are hosted primarily by the beta subunits. The protein is ATP synthase subunit beta of Buchnera aphidicola subsp. Baizongia pistaciae (strain Bp).